Reading from the N-terminus, the 689-residue chain is Glycine--tRNA ligase beta subunit (689 aa).

It belongs to the class-II aminoacyl-tRNA synthetase family. As to quaternary structure, tetramer of two alpha and two beta subunits.

It is found in the cytoplasm. It carries out the reaction tRNA(Gly) + glycine + ATP = glycyl-tRNA(Gly) + AMP + diphosphate. In Hamiltonella defensa subsp. Acyrthosiphon pisum (strain 5AT), this protein is Glycine--tRNA ligase beta subunit.